Consider the following 372-residue polypeptide: Transcription factor MYB80 (372 aa).

HTH myb-type domains are found at residues 9–65 and 66–116; these read KDNV…RPDL and KHGE…KKKL. DNA-binding regions (H-T-H motif) lie at residues 37–61 and 89–112; these read WRLIPKNAGLQRCGKSCRLRWTNYL and WSVIAAQLPGRTDNDVKNHWNTKL. Polar residues predominate over residues 298-311; it reads MWSHQSLYSGSSGT. The interval 298–347 is disordered; sequence MWSHQSLYSGSSGTEEARRELPEKGNDSVGSSGGDDDAADDGKDSGKGAA. Positions 312–323 are enriched in basic and acidic residues; sequence EEARRELPEKGN.

Its subcellular location is the nucleus. Functionally, essential for tapetum development in anthers and microsporogenesis. May regulate the timing of tapetal programmed cell death (PCD) which is critical for pollen development. The sequence is that of Transcription factor MYB80 from Oryza sativa subsp. japonica (Rice).